Here is a 563-residue protein sequence, read N- to C-terminus: Kelch repeat and BTB domain-containing protein 1 (563 aa).

The BTB domain maps to 21–88 (CDINIVINDE…IYGIPLSLTN (68 aa)). The region spanning 123–219 (CIDFYIYADK…SLLSPQVIKS (97 aa)) is the BACK domain. Kelch repeat units lie at residues 252–297 (IELI…VMDN), 298–346 (IIYM…VDDE), 347–395 (YIYC…MLNG), 397–441 (IYVI…VHAG), 442–492 (KIYI…SVHN), and 494–540 (LYVG…PIKH).

In terms of assembly, interacts (via BTB domain) with host CUL3.

Its subcellular location is the host cytoplasm. In terms of biological role, probable substrate-specific adapter of CUL3-containing E3 ubiquitin-protein ligases which mediate the ubiquitination and subsequent proteasomal degradation of host target proteins. The polypeptide is Kelch repeat and BTB domain-containing protein 1 (KBTB1) (Mus musculus (Mouse)).